A 165-amino-acid chain; its full sequence is Large ribosomal subunit protein uL15 (165 aa).

The interval 1 to 44 (MSLNQLKAPRGANRAKKRVGRGQGSGLGKTAGRGGKGQKARSGN) is disordered. Residues 21–37 (RGQGSGLGKTAGRGGKG) show a composition bias toward gly residues.

The protein belongs to the universal ribosomal protein uL15 family. Part of the 50S ribosomal subunit.

Binds to the 23S rRNA. The polypeptide is Large ribosomal subunit protein uL15 (Anaeromyxobacter dehalogenans (strain 2CP-C)).